Consider the following 229-residue polypeptide: Thylakoid lumenal 19 kDa protein, chloroplastic (229 aa).

It localises to the plastid. It is found in the chloroplast thylakoid lumen. The protein is Thylakoid lumenal 19 kDa protein, chloroplastic of Arabidopsis thaliana (Mouse-ear cress).